The primary structure comprises 446 residues: Calcium-binding and coiled-coil domain-containing protein 2 (446 aa).

Residues 133 to 136 (ILVV) carry the CLIR motif. Residues 137 to 349 (TTQGEVEEIE…RENSRLLSYM (213 aa)) are a coiled coil. The LIR-like signature appears at 203 to 206 (DYWE). Residues 362-390 (TSDEGGARQNPGLAYGNPYSGIQESSSPS) are disordered. The segment at 371–381 (NPGLAYGNPYS) is interaction with LGALS8. A compositionally biased stretch (polar residues) spans 381–390 (SGIQESSSPS). Residues 395–446 (KKCPICKADDICDHTLEQQQMQPLCFNCPICDKIFPATEKQIFEDHVFCHSL) are interaction with MYO6. The segment at 419–444 (CFNCPICDKIFPATEKQIFEDHVFCH) adopts a UBZ1-type zinc-finger fold. Zn(2+) is bound by residues Cys422, Cys425, His440, and His444. Position 445 is a phosphoserine (Ser445).

It belongs to the CALCOCO family. Dimer. Part of a complex consisting of CALCOCO2, TAX1BP1 and MYO6. Interacts with MYO6. Interacts with GEMIN4. Interacts with ATG8 family members MAP1LC3A, MAP1LC3B, GABARAP, GABARAPL1 and GABARAPL2. Interacts with ATG8 family member MAP1LC3C. Interacts with LGALS8. Interacts with TOM1; the interaction is indirect and is mediated by MYO6, which acts as a bridge between TOM1 and CALCOCO2. Interacts with AZI2. As to quaternary structure, (Microbial infection) Interacts with Lassa virus protein Z. In terms of assembly, (Microbial infection) Interacts with Mopeia virus protein Z. In terms of processing, (Microbial infection) Cleaved by S.pyogenes SpeB protease; leading to its degradation. Degradation by SpeB prevents autophagy, promoting to S.pyogenes intracellular replication. In terms of tissue distribution, expressed in all tissues tested with highest expression in skeletal muscle and lowest in brain.

It localises to the cytoplasm. The protein localises to the perinuclear region. It is found in the cytoskeleton. Its subcellular location is the cytoplasmic vesicle. The protein resides in the autophagosome membrane. Xenophagy-specific receptor required for autophagy-mediated intracellular bacteria degradation. Acts as an effector protein of galectin-sensed membrane damage that restricts the proliferation of infecting pathogens such as Salmonella typhimurium upon entry into the cytosol by targeting LGALS8-associated bacteria for autophagy. Initially orchestrates bacteria targeting to autophagosomes and subsequently ensures pathogen degradation by regulating pathogen-containing autophagosome maturation. Bacteria targeting to autophagosomes relies on its interaction with MAP1LC3A, MAP1LC3B and/or GABARAPL2, whereas regulation of pathogen-containing autophagosome maturation requires the interaction with MAP3LC3C. May play a role in ruffle formation and actin cytoskeleton organization and seems to negatively regulate constitutive secretion. This is Calcium-binding and coiled-coil domain-containing protein 2 (CALCOCO2) from Homo sapiens (Human).